A 209-amino-acid polypeptide reads, in one-letter code: GTP-binding protein RHB1 (209 aa).

The residue at position 1 (Met-1) is an N-acetylmethionine. GTP is bound by residues Gly-28, Lys-29, Thr-30, Thr-31, Val-42, Tyr-45, Thr-48, Asp-132, and Ala-172. Position 30 (Thr-30) interacts with Mg(2+). The short motif at 45 to 53 (YYPTIENEF) is the Effector region element. Thr-48 serves as a coordination point for Mg(2+). Position 206 is a cysteine methyl ester (Cys-206). Residue Cys-206 is the site of S-farnesyl cysteine attachment. The propeptide at 207–209 (SIM) is removed in mature form.

The protein belongs to the small GTPase superfamily. Rheb family. In terms of assembly, interacts with BTN2.

The protein localises to the cell membrane. The enzyme catalyses GTP + H2O = GDP + phosphate + H(+). Binds GTP and exhibits intrinsic GTPase activity. Involved in the regulation of arginine and lysine uptake. Acts through the CAN1 permease. The protein is GTP-binding protein RHB1 (RHB1) of Saccharomyces cerevisiae (strain ATCC 204508 / S288c) (Baker's yeast).